We begin with the raw amino-acid sequence, 228 residues long: 2-C-methyl-D-erythritol 4-phosphate cytidylyltransferase (228 aa).

The protein belongs to the IspD/TarI cytidylyltransferase family. IspD subfamily.

The catalysed reaction is 2-C-methyl-D-erythritol 4-phosphate + CTP + H(+) = 4-CDP-2-C-methyl-D-erythritol + diphosphate. It functions in the pathway isoprenoid biosynthesis; isopentenyl diphosphate biosynthesis via DXP pathway; isopentenyl diphosphate from 1-deoxy-D-xylulose 5-phosphate: step 2/6. Functionally, catalyzes the formation of 4-diphosphocytidyl-2-C-methyl-D-erythritol from CTP and 2-C-methyl-D-erythritol 4-phosphate (MEP). In Actinobacillus pleuropneumoniae serotype 3 (strain JL03), this protein is 2-C-methyl-D-erythritol 4-phosphate cytidylyltransferase.